The primary structure comprises 482 residues: G2/mitotic-specific cyclin cdc13 (482 aa).

3 stretches are compositionally biased toward polar residues: residues 35 to 55 (LHSS…STNV), 78 to 92 (SKNT…SVST), and 118 to 140 (SVFN…SVST). The tract at residues 35-140 (LHSSENSLVN…LSTKSHSVST (106 aa)) is disordered. One can recognise a Cyclin N-terminal domain in the interval 206–332 (DIFEYLNELE…ILRVLEFNLA (127 aa)).

It belongs to the cyclin family. Cyclin AB subfamily. Interacts with cdc2. Interacts with rum1. Associates with microtubules. Also interacts with cdc11.

Its subcellular location is the nucleus. It localises to the cytoplasm. The protein resides in the cytoskeleton. The protein localises to the microtubule organizing center. It is found in the spindle pole body. Essential for the control of the cell cycle at the G2/M (mitosis) transition. Interacts with the cdc2 protein kinase to form MPF. G2/M cyclins accumulate steadily during G2 and are abruptly destroyed at mitosis. Involved in the reorganization of the cytoskeleton on transition from G2 to mitosis. Association with rum1 promotes its proteolysis during G1. Also essential for initiation of meiosis II. The chain is G2/mitotic-specific cyclin cdc13 from Schizosaccharomyces pombe (strain 972 / ATCC 24843) (Fission yeast).